We begin with the raw amino-acid sequence, 562 residues long: MRDSSSPARPSLTQLPAWQALKSHFETMRDRHLRDLFAADPRRGERLVAEGAGVYLDYSKNRITDETLRLLLQLAREAGVEARRDAMFAGERINLTENRAVLHSALRAPRGAAVTVDGTNVVQEVQEVLDRMSAFADRVRAGTWLGATGKPIRNIVNIGIGGSDLGPVMAYEALKFYADRRLTLRFVSNVDGTDLVEKTRDLDPAETLFIVSSKTFTTLETMANAQSARAWLLAGLENVPDENAAIARPIISRHFVAVSTNAAEVERFGIDTANMFGFWDWVGGRYSVDSAIGLSLMIAIGPNGFRDFLAGFHAMDEHFRSAPLEQNLPVLLGVLGVWYRNFFGAQTYAVLPYDQYLAYFPTYLQQLDMESNGKHVTLDGQPVDYDTGPVVWGQPGTNGQHAFYQLIHQGTTLIPCDFLGFCQTLNPLPTPGGPSHHDLLMANMFAQTEALAFGKSLEQVQAEGVAADLAPHRVFEGNRPTNTLLLDRLTPRTLGTLIALYEHKVFVQGAIWNINSFDQWGVELGKVLASKIVPELEAPGEPELKHDSSTNALIRRYRARRR.

The Proton donor role is filled by Glu-370. Residues His-401 and Lys-526 contribute to the active site.

It belongs to the GPI family.

It localises to the cytoplasm. The enzyme catalyses alpha-D-glucose 6-phosphate = beta-D-fructose 6-phosphate. It functions in the pathway carbohydrate biosynthesis; gluconeogenesis. Its pathway is carbohydrate degradation; glycolysis; D-glyceraldehyde 3-phosphate and glycerone phosphate from D-glucose: step 2/4. In terms of biological role, catalyzes the reversible isomerization of glucose-6-phosphate to fructose-6-phosphate. The sequence is that of Glucose-6-phosphate isomerase from Deinococcus geothermalis (strain DSM 11300 / CIP 105573 / AG-3a).